Reading from the N-terminus, the 96-residue chain is Aspartyl/glutamyl-tRNA(Asn/Gln) amidotransferase subunit C (96 aa).

Belongs to the GatC family. As to quaternary structure, heterotrimer of A, B and C subunits.

The enzyme catalyses L-glutamyl-tRNA(Gln) + L-glutamine + ATP + H2O = L-glutaminyl-tRNA(Gln) + L-glutamate + ADP + phosphate + H(+). The catalysed reaction is L-aspartyl-tRNA(Asn) + L-glutamine + ATP + H2O = L-asparaginyl-tRNA(Asn) + L-glutamate + ADP + phosphate + 2 H(+). Its function is as follows. Allows the formation of correctly charged Asn-tRNA(Asn) or Gln-tRNA(Gln) through the transamidation of misacylated Asp-tRNA(Asn) or Glu-tRNA(Gln) in organisms which lack either or both of asparaginyl-tRNA or glutaminyl-tRNA synthetases. The reaction takes place in the presence of glutamine and ATP through an activated phospho-Asp-tRNA(Asn) or phospho-Glu-tRNA(Gln). This chain is Aspartyl/glutamyl-tRNA(Asn/Gln) amidotransferase subunit C, found in Chloroflexus aurantiacus (strain ATCC 29366 / DSM 635 / J-10-fl).